Here is a 188-residue protein sequence, read N- to C-terminus: MKASTVLQIAYLVSQESKCCSWKVGAVIEKNGRIISTGYNGSPAGGVNCDNYAAIEGWLLNKPKHTIIQGHKPECVSFGTSDRFVLAKEHRSAHSEWSSKNEIHAELNAILFAARNGSSIEGATMYVTLSPCPDCAKAIAQSGIKKLVYCETYDKNKPGWDDILRNAGIEVFNVPKLNWENISEFCGE.

The 171-residue stretch at 1–171 (MKASTVLQIA…DILRNAGIEV (171 aa)) folds into the CMP/dCMP-type deaminase domain. The Zn(2+) site is built by cysteine 19, cysteine 49, histidine 94, glutamate 102, and histidine 104. The active-site Proton donor is glutamate 106. Zn(2+)-binding residues include cysteine 132 and cysteine 135.

Belongs to the cytidine and deoxycytidylate deaminase family. In terms of assembly, homohexamer. Requires Zn(2+) as cofactor.

The enzyme catalyses dCMP + H2O + H(+) = dUMP + NH4(+). With respect to regulation, allosteric enzyme whose activity is greatly influenced by the end products of its metabolic pathway, dCTP and dTTP. In terms of biological role, supplies the nucleotide substrate for thymidylate synthetase. This is Deoxycytidylate deaminase (CD) from Enterobacteria phage T2 (Bacteriophage T2).